The following is a 201-amino-acid chain: Small ribosomal subunit protein uS4B (201 aa).

The S4 RNA-binding domain occupies 93-156 (QRLDTVVYRL…RSLAVVRESL (64 aa)).

This sequence belongs to the universal ribosomal protein uS4 family. Part of the 30S ribosomal subunit. Contacts protein S5. The interaction surface between S4 and S5 is involved in control of translational fidelity.

One of the primary rRNA binding proteins, it binds directly to 16S rRNA where it nucleates assembly of the body of the 30S subunit. In terms of biological role, with S5 and S12 plays an important role in translational accuracy. The sequence is that of Small ribosomal subunit protein uS4B from Symbiobacterium thermophilum (strain DSM 24528 / JCM 14929 / IAM 14863 / T).